Consider the following 446-residue polypeptide: Argininosuccinate synthase (446 aa).

Residues 17-25 (AFSGGLDTS) and A43 contribute to the ATP site. Y99 contacts L-citrulline. 2 residues coordinate ATP: G129 and T131. Positions 131, 135, and 136 each coordinate L-aspartate. N135 contacts L-citrulline. D136 serves as a coordination point for ATP. L-citrulline is bound by residues R139 and S192. An ATP-binding site is contributed by D194. 3 residues coordinate L-citrulline: T201, E203, and E280.

Belongs to the argininosuccinate synthase family. Type 2 subfamily. Homotetramer.

The protein resides in the cytoplasm. It carries out the reaction L-citrulline + L-aspartate + ATP = 2-(N(omega)-L-arginino)succinate + AMP + diphosphate + H(+). Its pathway is amino-acid biosynthesis; L-arginine biosynthesis; L-arginine from L-ornithine and carbamoyl phosphate: step 2/3. The chain is Argininosuccinate synthase from Variovorax paradoxus (strain S110).